The following is a 677-amino-acid chain: Methionine--tRNA ligase (677 aa).

The short motif at 15 to 25 (PYANGSIHLGH) is the 'HIGH' region element. Zn(2+) is bound by residues Cys146, Cys149, Cys159, and Cys162. A 'KMSKS' region motif is present at residues 333-337 (KMSKS). Lys336 lines the ATP pocket. The 103-residue stretch at 575–677 (DFAKVDLRVA…DGAKPGQQVK (103 aa)) folds into the tRNA-binding domain.

This sequence belongs to the class-I aminoacyl-tRNA synthetase family. MetG type 1 subfamily. Homodimer. The cofactor is Zn(2+).

It is found in the cytoplasm. It carries out the reaction tRNA(Met) + L-methionine + ATP = L-methionyl-tRNA(Met) + AMP + diphosphate. In terms of biological role, is required not only for elongation of protein synthesis but also for the initiation of all mRNA translation through initiator tRNA(fMet) aminoacylation. The chain is Methionine--tRNA ligase from Citrobacter koseri (strain ATCC BAA-895 / CDC 4225-83 / SGSC4696).